We begin with the raw amino-acid sequence, 776 residues long: Cullin-1 (776 aa).

R63 is subject to Omega-N-methylarginine. One can recognise a Cullin neddylation domain in the interval 706–766 (DRKLLIQAAI…IEKEYLERVD (61 aa)). K720 is covalently cross-linked (Glycyl lysine isopeptide (Lys-Gly) (interchain with G-Cter in NEDD8)).

This sequence belongs to the cullin family. In terms of assembly, component of multiple Cul1-RING E3 ubiquitin-protein ligase complexes commonly known as SCF (SKP1-CUL1-F-box) complexes, consisting of CUL1, SKP1, RBX1 and a variable F-box domain-containing protein as substrate-specific subunit. Component of the SCF(FBXW11) complex containing FBXW11. Component of the SCF(SKP2) complex containing SKP2, in which it interacts directly with SKP1, SKP2 and RBX1. Component of the SCF(FBXW2) complex containing FBXW2. Component of the SCF(FBXO32) complex containing FBXO32. Component of the probable SCF(FBXO7) complex containing FBXO7. Component of the SCF(FBXO10) complex containing FBXO10. Component of the SCF(FBXO11) complex containing FBXO11. Component of the SCF(FBXO25) complex containing FBXO25. Component of the SCF(FBXO33) complex containing FBXO33. Component of the probable SCF(FBXO4) complex containing FBXO4. Component of the SCF(FBXO44) complex, composed of SKP1, CUL1 and FBXO44. Component of the SCF(BTRC) complex, composed of SKP1, CUL1 and BTRC. This complex binds phosphorylated NFKBIA. Part of a SCF complex consisting of CUL1, RBX1, SKP1 and FBXO2. Component of a SCF(SKP2)-like complex containing CUL1, SKP1, TRIM21 and SKP2. Component of the SCF(FBXO17) complex, composed of SKP1, CUL1 and FBXO17. Component of the SCF(FBXO27) complex, composed of SKP1, CUL1 and FBXO27. Component of the SCF(CCNF) complex consisting of CUL1, RBX1, SKP1 and CCNF. Interacts with CCNF. Component of the SCF(FBXL3) complex composed of CUL1, SKP1, RBX1 and FBXL3. Component of the SCF(FBXL21) complex composed of CUL1, SKP1, RBX1 and FBXL21. Component of the SCF(FBXO9) composed of CUL1, SKP1, RBX1 and FBXO9. Component of the SCF(FBXW7) composed of CUL1, SKP1, RBX1 and FBXW7. Component of the SCF(FBXO31) complex composed of CUL1, SKP1, RBX1 and FBXO31. Interacts with CHEK2; mediates CHEK2 ubiquitination and regulates its function. Part of a complex with TIP120A/CAND1 and RBX1. The unneddylated form interacts with TIP120A/CAND1 and the interaction mediates the exchange of the F-box substrate-specific subunit. Can self-associate. Interacts with FBXW8. Interacts with RNF7. Interacts with TRIM21. Interacts with COPS2. Interacts with DCUN1D1 and UBE2M. Interacts with DCUN1D3. Interacts with DCUN1D4. Identified in a complex with RBX1 and GLMN. Interacts with CEP68 as part of the SCF(FBXW11) complex; the interaction is probably mediated by FBXW11 and the complex also contains CDK5RAP2 and PCNT. Interacts (when neddylated) with ARIH1; leading to activate the E3 ligase activity of ARIH1. Interacts with COPS9. Interacts with UBXN1. Interacts with KAT7, probably as part of an SCF complex; the interaction mediates KAT7 ubiquitination. Interacts with NOTCH2. Part of a complex that contains DCUN1D5, CUL1 and RBX1; this interaction is bridged by CUL1. Interacts (unneddylated form) with DCUN1D1, DCUN1D2, DCUN1D3, DCUN1D4 and DCUN1D5; these interactions promote the cullin neddylation. Interacts (via the C-terminal domain) with CUL7; the interaction seems to be mediated by FBXW8; it is likely specific to FBXW8, but not other F-box proteins. Interacts with UBR2, as part of SCF(BTRC) complex; the interaction mediates 'Lys-48'-linked ubiquitination of UBR2 and is regulated by DUSP22 in the T-cell receptor signaling pathway. As to quaternary structure, (Microbial infection) Interacts with murine cytomegalovirus M48. Neddylated; which enhances the ubiquitination activity of SCF. Neddylation prevents binding of the inhibitor CAND1. Neddylation leads to structural rearrangment in the complex that allows interaction between the E2 ubiquitin-conjugating enzyme and the acceptor ubiquitin. Deneddylated via its interaction with the COP9 signalosome (CSN) complex. Post-translationally, (Microbial infection) Deneddylated by murine cytomegalovirus M48 leading to a S-phase-like environment that is required for efficient replication of the viral genome. As to expression, embryo fibroblasts and embryo preadipocytes.

The protein operates within protein modification; protein ubiquitination. Its function is as follows. Core component of multiple cullin-RING-based SCF (SKP1-CUL1-F-box protein) E3 ubiquitin-protein ligase complexes, which mediate the ubiquitination of proteins involved in cell cycle progression, signal transduction and transcription. SCF complexes and ARIH1 collaborate in tandem to mediate ubiquitination of target proteins. In the SCF complex, serves as a rigid scaffold that organizes the SKP1-F-box protein and RBX1 subunits. May contribute to catalysis through positioning of the substrate and the ubiquitin-conjugating enzyme. The E3 ubiquitin-protein ligase activity of the complex is dependent on the neddylation of the cullin subunit and exchange of the substrate recognition component is mediated by TIP120A/CAND1. The functional specificity of the SCF complex depends on the F-box protein as substrate recognition component. SCF(BTRC) and SCF(FBXW11) direct ubiquitination of CTNNB1 and participate in Wnt signaling. SCF(FBXW11) directs ubiquitination of phosphorylated NFKBIA. SCF(BTRC) directs ubiquitination of NFKBIB, NFKBIE, ATF4, SMAD3, SMAD4, CDC25A, FBXO5 and probably NFKB2. SCF(BTRC) and/or SCF(FBXW11) direct ubiquitination of CEP68. SCF(SKP2) directs ubiquitination of phosphorylated CDKN1B/p27kip and is involved in regulation of G1/S transition. SCF(SKP2) directs ubiquitination of ORC1, CDT1, RBL2, ELF4, CDKN1A, RAG2, FOXO1A, and probably MYC and TAL1. SCF(FBXW7) directs ubiquitination of cyclin E, NOTCH1 released notch intracellular domain (NICD), and probably PSEN1. SCF(FBXW2) directs ubiquitination of GCM1. SCF(FBXO32) directs ubiquitination of MYOD1. SCF(FBXO7) directs ubiquitination of BIRC2 and DLGAP5. SCF(FBXO33) directs ubiquitination of YBX1. SCF(FBXO1) directs ubiquitination of BCL6 and DTL but does not seem to direct ubiquitination of TP53. SCF(BTRC) mediates the ubiquitination of NFKBIA at 'Lys-21' and 'Lys-22'; the degradation frees the associated NFKB1-RELA dimer to translocate into the nucleus and to activate transcription. SCF(CCNF) directs ubiquitination of CCP110. SCF(FBXL3) and SCF(FBXL21) direct ubiquitination of CRY1 and CRY2. SCF(FBXO9) directs ubiquitination of TTI1 and TELO2. SCF(FBXO10) directs ubiquitination of BCL2. Neddylated CUL1-RBX1 ubiquitinates p53/TP53 recruited by Cul7-RING(FBXW8) complex. SCF(BTRC) directs 'Lys-48'-linked ubiquitination of UBR2 in the T-cell receptor signaling pathway. The SCF(FBXO31) protein ligase complex specifically mediates the ubiquitination of proteins amidated at their C-terminus in response to oxidative stress. The chain is Cullin-1 (Cul1) from Mus musculus (Mouse).